Here is a 753-residue protein sequence, read N- to C-terminus: MTISPPEREAKVRVTVDTDPVPTSFEKWGKPGHFSRSLARGPKTTTWIWNLHADAHDFDSHTSDLEDVSRKIFSAHFGHLAIIFVWLSGAYFHGAKFSNYEAWLADPTGIKPSAQVVWPVLGQGILNGDMGGGFHGIQITSGLFQLWRASGITNEYQLYCTAIGGLVMAALMMFAGWFHYHKKAPKLEWFQNVESMMNHHLAGLLGLGCLSWAGHQIHVSLPINKLLDSGVAPEDIPLPHEFLFNKSLMAELYPSFAKGLTPFFTLNWGEYADFLTFKGGLNPVTGGLWLSDTAHHHLALAVLFIVAGHMYRTNWGIGHSMKEILEAHKDPLIIGGEGHKGLYEALTTSWHAQLAINLAMLGSLSIIVAHHMYAMPPYPYIATDYPTQLSLFTHHMWIGGFLIVGAGAHGAIFMVRDYDPAKNVNNVLDRVIRHRDAIISHLNWVCIFLGFHSFGLYVHNDTLRALGRPQDMFSDTGIQLQPIFAQWVQNLHSLAPGNTAPNALASVSPIFGGDVLAVGGKVAMMPMTLGTADFMVHHIHAFTIHVTALILLKGVLYARNSRLIPDKSELGFRFPCDGPGRGGTCQVSGWDHVFLGLFWMYNSLSIVIFHFSWKMQSDVWGTVDPDGTVSHITYGNFAQSAVTINGWLRDFLWAQASNVITSYGSELSAYGLLFLGAHFIWAFSLMFLFSGRGYWQELIESIVWAHNKLKVAPAIQPRALSITQGRAVGVAHYLLGGIVTTWAFFLARIIAVG.

The next 8 membrane-spanning stretches (helical) occupy residues 72–95 (IFSA…FHGA), 158–181 (LYCT…FHYH), 197–221 (MNHH…HVSL), 293–311 (TAHH…GHMY), 350–373 (WHAQ…HHMY), 389–415 (LSLF…IFMV), 437–459 (AIIS…LYVH), and 534–552 (FMVH…LILL). Residues Cys-576 and Cys-585 each contribute to the [4Fe-4S] cluster site. 2 helical membrane-spanning segments follow: residues 592-613 (HVFL…HFSW) and 667-689 (LSAY…MFLF). A chlorophyll a'-binding site is contributed by His-678. Positions 686 and 694 each coordinate chlorophyll a. Trp-695 provides a ligand contact to phylloquinone. Residues 727 to 747 (AVGVAHYLLGGIVTTWAFFLA) form a helical membrane-spanning segment.

This sequence belongs to the PsaA/PsaB family. The PsaA/B heterodimer binds the P700 chlorophyll special pair and subsequent electron acceptors. PSI consists of a core antenna complex that captures photons, and an electron transfer chain that converts photonic excitation into a charge separation. The cyanobacterial PSI reaction center is composed of one copy each of PsaA,B,C,D,E,F,I,J,K,L,M and X, and forms trimeric complexes. PSI electron transfer chain: 5 chlorophyll a, 1 chlorophyll a', 2 phylloquinones and 3 4Fe-4S clusters. PSI core antenna: 90 chlorophyll a, 22 carotenoids, 3 phospholipids and 1 galactolipid. P700 is a chlorophyll a/chlorophyll a' dimer, A0 is one or more chlorophyll a, A1 is one or both phylloquinones and FX is a shared 4Fe-4S iron-sulfur center. is required as a cofactor.

It localises to the cellular thylakoid membrane. It catalyses the reaction reduced [plastocyanin] + hnu + oxidized [2Fe-2S]-[ferredoxin] = oxidized [plastocyanin] + reduced [2Fe-2S]-[ferredoxin]. PsaA and PsaB bind P700, the primary electron donor of photosystem I (PSI), as well as the electron acceptors A0, A1 and FX. PSI is a plastocyanin/cytochrome c6-ferredoxin oxidoreductase, converting photonic excitation into a charge separation, which transfers an electron from the donor P700 chlorophyll pair to the spectroscopically characterized acceptors A0, A1, FX, FA and FB in turn. Oxidized P700 is reduced on the lumenal side of the thylakoid membrane by plastocyanin or cytochrome c6. The polypeptide is Photosystem I P700 chlorophyll a apoprotein A1 (Trichodesmium erythraeum (strain IMS101)).